The following is a 74-amino-acid chain: Protein SlyX homolog (74 aa).

The protein belongs to the SlyX family.

This chain is Protein SlyX homolog, found in Neisseria meningitidis serogroup C (strain 053442).